A 372-amino-acid chain; its full sequence is Chaperone protein DnaJ (372 aa).

In terms of domain architecture, J spans 5–69 (DYYEVLGVSK…DKRKQYDQFG (65 aa)). Residues 139 to 221 (GVDKIIELDL…CKGKGKYLER (83 aa)) form a CR-type zinc finger. Residues Cys-152, Cys-155, Cys-169, Cys-172, Cys-195, Cys-198, Cys-209, and Cys-212 each coordinate Zn(2+). 4 CXXCXGXG motif repeats span residues 152–159 (CSACFGSG), 169–176 (CNNCHGTG), 195–202 (CNVCNGAG), and 209–216 (CKNCKGKG).

This sequence belongs to the DnaJ family. Homodimer. Zn(2+) is required as a cofactor.

It localises to the cytoplasm. In terms of biological role, participates actively in the response to hyperosmotic and heat shock by preventing the aggregation of stress-denatured proteins and by disaggregating proteins, also in an autonomous, DnaK-independent fashion. Unfolded proteins bind initially to DnaJ; upon interaction with the DnaJ-bound protein, DnaK hydrolyzes its bound ATP, resulting in the formation of a stable complex. GrpE releases ADP from DnaK; ATP binding to DnaK triggers the release of the substrate protein, thus completing the reaction cycle. Several rounds of ATP-dependent interactions between DnaJ, DnaK and GrpE are required for fully efficient folding. Also involved, together with DnaK and GrpE, in the DNA replication of plasmids through activation of initiation proteins. In Mycoplasma capricolum subsp. capricolum (strain California kid / ATCC 27343 / NCTC 10154), this protein is Chaperone protein DnaJ.